Here is a 169-residue protein sequence, read N- to C-terminus: Actin-related protein 2/3 complex subunit 4 (169 aa).

Belongs to the ARPC4 family. In terms of assembly, component of the Arp2/3 complex composed of arpB/Arp2, arpC/Arp3, arcA/p41-arc, arcB/p34-arc, arcC/p21-arc, arcD/p20-arc and arcE/p16-arc. Interacts with carmil (via the region between the LRR domain and COOH-terminal proline-rich domain); carmil is required for Arp2/3-dependent actin nucleation. Arp2/3 complex, MyoB, MyoC, and the alpha and beta subunits of capping protein all form a larger complex with carmil.

Its subcellular location is the cytoplasm. The protein localises to the cytoskeleton. The protein resides in the cytosol. It is found in the cell cortex. It localises to the cell projection. Its subcellular location is the pseudopodium. Its function is as follows. Functions as a component of the Arp2/3 complex which is involved in regulation of actin polymerization and together with an activating nucleation-promoting factor (NPF) mediates the formation of branched actin networks. Seems to contact the pointed end of the daughter actin filament. The Arp2/3 complex is involved in organizing the actin system in cell motility and chemotaxis, in phagocytosis and macropinocytosis, at late steps of endosome processing, and in mitosis. In concert with a group of other proteins, the Arp2/3 complex plays a general role in the rapid activation and adaptation of the actin system to its multiple functions. The protein is Actin-related protein 2/3 complex subunit 4 (arcD) of Dictyostelium discoideum (Social amoeba).